The sequence spans 417 residues: Lissencephaly-1 homolog (417 aa).

The LisH domain maps to Q7–L39. Residues T52–R80 adopt a coiled-coil conformation. The tract at residues E72–R93 is disordered. WD repeat units lie at residues G102–K143, G144–H185, G186–T225, G228–T267, E270–T339, G342–N383, and A385–G417.

The protein belongs to the WD repeat LIS1/nudF family.

The protein localises to the cytoplasm. The protein resides in the cytoskeleton. It localises to the microtubule organizing center. Its subcellular location is the centrosome. In terms of biological role, positively regulates the activity of the minus-end directed microtubule motor protein dynein. May enhance dynein-mediated microtubule sliding by targeting dynein to the microtubule plus end. Required for several dynein- and microtubule-dependent processes. In Heterostelium pallidum (strain ATCC 26659 / Pp 5 / PN500) (Cellular slime mold), this protein is Lissencephaly-1 homolog.